We begin with the raw amino-acid sequence, 87 residues long: Putative regulatory protein syc0519_c (87 aa).

It belongs to the RemA family.

In Synechococcus sp. (strain ATCC 27144 / PCC 6301 / SAUG 1402/1) (Anacystis nidulans), this protein is Putative regulatory protein syc0519_c.